The following is an 893-amino-acid chain: Major vault protein (893 aa).

Position 2 is an N-acetylalanine (Ala2). MVP repeat units lie at residues 2 to 56, 57 to 111, 112 to 164, 165 to 217, 218 to 272, 273 to 323, 324 to 379, 380 to 457, and 458 to 520; these read ATEE…VPPR, HYCT…DITP, LQVV…EIIQ, ATII…DLVD, AVIL…GVVP, ITTL…IQDV, YVLS…ERQA, IPLD…KTRV, and VSYR…LLGP. Residue Lys444 forms a Glycyl lysine isopeptide (Lys-Gly) (interchain with G-Cter in SUMO2) linkage. Ser445 bears the Phosphoserine mark. Lys704 participates in a covalent cross-link: Glycyl lysine isopeptide (Lys-Gly) (interchain with G-Cter in SUMO2). The segment at 856 to 893 is disordered; sequence QPLGRRVASGPSPGEGISPQSAQAPQAPGDNHVVPVLR.

As to quaternary structure, the vault ribonucleoprotein particle is a huge (400 A x 670 A) cage structure of 12.9 MDa. It consists of a dimer of half-vaults, with each half-vault comprising 39 identical major vault protein (MVP) chains, PARP4 and one or more vault RNAs (vRNAs). Interacts with TEP1. Interacts with PTEN and activated MAPK1. The phosphorylated protein interacts with the SH2 domains of PTPN11 and SRC. Interacts with APEX1. May interact with ZNF540. Phosphorylated on Tyr residues after EGF stimulation. Post-translationally, dephosphorylated by PTPN11. As to expression, present in most normal tissues. Higher expression observed in epithelial cells with secretory and excretory functions, as well as in cells chronically exposed to xenobiotics, such as bronchial cells and cells lining the intestine. Overexpressed in many multidrug-resistant cancer cells.

Its subcellular location is the cytoplasm. The protein localises to the nucleus. It is found in the nuclear pore complex. The protein resides in the perinuclear region. Its function is as follows. Required for normal vault structure. Vaults are multi-subunit structures that may act as scaffolds for proteins involved in signal transduction. Vaults may also play a role in nucleo-cytoplasmic transport. Down-regulates IFNG-mediated STAT1 signaling and subsequent activation of JAK. Down-regulates SRC activity and signaling through MAP kinases. The chain is Major vault protein (MVP) from Homo sapiens (Human).